Reading from the N-terminus, the 477-residue chain is Bifunctional protein HldE (477 aa).

Positions 1–319 are ribokinase; sequence MTPPLPGFRD…AALGGGPAPA (319 aa). 195–198 is an ATP binding site; it reads NLAE. Asp264 is an active-site residue. A cytidylyltransferase region spans residues 346–477; sequence MTNGCFDLLH…DLIARIRSRG (132 aa).

This sequence in the N-terminal section; belongs to the carbohydrate kinase PfkB family. It in the C-terminal section; belongs to the cytidylyltransferase family. Homodimer.

The catalysed reaction is D-glycero-beta-D-manno-heptose 7-phosphate + ATP = D-glycero-beta-D-manno-heptose 1,7-bisphosphate + ADP + H(+). It catalyses the reaction D-glycero-beta-D-manno-heptose 1-phosphate + ATP + H(+) = ADP-D-glycero-beta-D-manno-heptose + diphosphate. The protein operates within nucleotide-sugar biosynthesis; ADP-L-glycero-beta-D-manno-heptose biosynthesis; ADP-L-glycero-beta-D-manno-heptose from D-glycero-beta-D-manno-heptose 7-phosphate: step 1/4. Its pathway is nucleotide-sugar biosynthesis; ADP-L-glycero-beta-D-manno-heptose biosynthesis; ADP-L-glycero-beta-D-manno-heptose from D-glycero-beta-D-manno-heptose 7-phosphate: step 3/4. In terms of biological role, catalyzes the phosphorylation of D-glycero-D-manno-heptose 7-phosphate at the C-1 position to selectively form D-glycero-beta-D-manno-heptose-1,7-bisphosphate. Functionally, catalyzes the ADP transfer from ATP to D-glycero-beta-D-manno-heptose 1-phosphate, yielding ADP-D-glycero-beta-D-manno-heptose. The protein is Bifunctional protein HldE of Halorhodospira halophila (strain DSM 244 / SL1) (Ectothiorhodospira halophila (strain DSM 244 / SL1)).